The following is a 124-amino-acid chain: SGPWMCYPGQAFQVPALPACRPLLRLQCNGSQVPEAVLRDCCQQLAHISEWCRCGALYSMLDSMYKEHGAQEGQAGTGAFPRCRREVVKLTAASITAVCRLPIVVDASGDGAYVCKDVAAYPDA.

Disulfide bonds link cysteine 6/cysteine 52, cysteine 20/cysteine 41, cysteine 28/cysteine 83, cysteine 42/cysteine 99, and cysteine 54/cysteine 115.

It belongs to the protease inhibitor I6 (cereal trypsin/alpha-amylase inhibitor) family. In terms of assembly, homodimer. Post-translationally, the disulfide bonds are essential for the inhibitor activity. In terms of tissue distribution, endosperm.

The protein localises to the secreted. Alpha-amylase inhibitor. This is Alpha-amylase inhibitor 0.19 from Triticum aestivum (Wheat).